A 1432-amino-acid polypeptide reads, in one-letter code: ABC transporter asL7 (1432 aa).

The span at 1-20 (MFDTTKLQSSTQDGSTSSVT) shows a compositional bias: polar residues. The interval 1–36 (MFDTTKLQSSTQDGSTSSVTGEPIFGANDPNSELNP) is disordered. An ABC transporter 1 domain is found at 91–341 (LALPGMLIRN…FERLGFECPS (251 aa)). An N-linked (GlcNAc...) asparagine glycan is attached at Asn265. 6 consecutive transmembrane segments (helical) span residues 450 to 470 (PTIV…SLFF), 484 to 504 (VVLF…VMTL), 530 to 550 (VLMD…VFYF), 559 to 579 (GNFF…SGIF), 597 to 617 (MIPA…MVPI), and 702 to 722 (IGIV…TSEY). Residues 786–1029 (FHWRNVCYDI…TLVEYFERKA (244 aa)) enclose the ABC transporter 2 domain. Position 822–829 (822–829 (GVSGAGKT)) interacts with ATP. Asn1017 carries an N-linked (GlcNAc...) asparagine glycan. Positions 1076–1095 (LSRLREHGSQSNSHDSEKSE) are disordered. A run of 6 helical transmembrane segments spans residues 1135-1155 (FALC…SPLS), 1166-1186 (VFQL…QFII), 1215-1235 (IPYY…PIGL), 1251-1271 (LMWL…HFCI), 1279-1299 (AGAN…GALI), and 1317-1337 (LSYL…VTCA). Asn1371 carries an N-linked (GlcNAc...) asparagine glycan. A helical membrane pass occupies residues 1402–1422 (FGIIWVYVIFNISAAITLYWV).

The protein belongs to the ABC transporter superfamily. ABCG family. PDR (TC 3.A.1.205) subfamily.

It localises to the cell membrane. Functionally, ABC transporter; part of the gene cluster that mediates the biosynthesis of xenovulene A, an unusual meroterpenoid that has potent inhibitory effects on the human gamma-aminobutyrate A (GABAA) benzodiazepine receptor. The polypeptide is ABC transporter asL7 (Sarocladium schorii (Acremonium strictum (strain IMI 501407))).